We begin with the raw amino-acid sequence, 201 residues long: Recombination protein RecR (201 aa).

The segment at 57-72 adopts a C4-type zinc-finger fold; it reads CADCRTFTEQPVCTIC. The region spanning 81–176 is the Toprim domain; sequence GQICVVESPA…MASRIAHGVP (96 aa).

The protein belongs to the RecR family.

May play a role in DNA repair. It seems to be involved in an RecBC-independent recombinational process of DNA repair. It may act with RecF and RecO. This chain is Recombination protein RecR, found in Sodalis glossinidius (strain morsitans).